The sequence spans 403 residues: Basic leucine zipper 25 (403 aa).

2 disordered regions span residues 13 to 128 (SFWP…APVV) and 156 to 259 (VKPE…EFDT). A compositionally biased stretch (low complexity) spans 24–33 (PGSSSTPSPT). The segment covering 56–69 (LSGSDSSPTTNTIE) has biased composition (polar residues). Composition is skewed to low complexity over residues 115–128 (APSS…APVV) and 161–174 (SSAS…AQGS). Positions 175 to 195 (IVAQTSPGASSVRFSPTTSTQ) are enriched in polar residues. Acidic residues predominate over residues 212–226 (DSDDDDLDGDADNGD). Ser213 carries the post-translational modification Phosphoserine. The bZIP domain occupies 229–292 (DVKRARRMLS…DAAAVDNRIL (64 aa)). The segment at 231 to 250 (KRARRMLSNRESARRSRRRK) is basic motif. The short motif at 233–240 (ARRMLSNR) is the Nuclear localization signal element. Positions 264 to 271 (LRAEHSTL) are leucine-zipper. Positions 332 to 345 (NTPSASSSIPPNSN) are enriched in low complexity. 2 disordered regions span residues 332-361 (NTPS…SAGL) and 380-403 (EGMQ…NHKH). Over residues 351–361 (ANSSTNTSAGL) the composition is skewed to polar residues.

It belongs to the bZIP family. In terms of assembly, homodimer. Forms a heterodimer with BZIP1, BZIP1, BZIP2, BZIP9, BZIP11, BZIP44, BZIP53 and BZIP63. Interacts with ABI3 and forms a complex made of ABI3, BZIP53 and BZIP25. In terms of tissue distribution, expressed in roots, shoots, stems, leaves, stipulae, siliques, seeds, pollen, and flowers.

The protein localises to the nucleus. Functionally, transcription factor that binds to the 5'-ACGT-3' box, especially present in G-box-like motif (5'-CCACGTGGCC-3'), ABRE elements, of seed storage protein (SSP) encoding gene promoters (e.g. At2S and CRU3) and promotes their expression in seeds when in complex with ABI3 and BZIP53. This is Basic leucine zipper 25 (BZIP25) from Arabidopsis thaliana (Mouse-ear cress).